The chain runs to 554 residues: Terpene synthase 17 (554 aa).

Mg(2+)-binding residues include Asp306, Asp310, and Glu458. Residues 306-310 carry the DDXXD motif motif; the sequence is DDTYD.

Belongs to the terpene synthase family. Tpsa subfamily. Mg(2+) is required as a cofactor. Mn(2+) serves as cofactor.

The catalysed reaction is (2E,6E)-farnesyl diphosphate = (+)-valencene + diphosphate. It catalyses the reaction (2E,6E)-farnesyl diphosphate = (E)-beta-farnesene + diphosphate. The enzyme catalyses (2E,6E)-farnesyl diphosphate = gamma-gurjunene + diphosphate. It carries out the reaction (2Z,6Z)-farnesyl diphosphate = beta-bisabolene + diphosphate. The catalysed reaction is (2Z,6Z)-farnesyl diphosphate = (E)-gamma-bisabolene + diphosphate. It catalyses the reaction (2E)-geranyl diphosphate = limonene + diphosphate. The enzyme catalyses (2E)-geranyl diphosphate = beta-myrcene + diphosphate. It carries out the reaction (2E)-geranyl diphosphate = (E)-beta-ocimene + diphosphate. The catalysed reaction is (2E)-geranyl diphosphate = terpinolene + diphosphate. It catalyses the reaction (2E)-geranyl diphosphate = gamma-terpinene + diphosphate. The enzyme catalyses (2Z,6Z)-farnesyl diphosphate = (Z)-gamma-bisabolene + diphosphate. It carries out the reaction (2E,6E)-farnesyl diphosphate = (1S,5S,6R)-alpha-bergamotene + diphosphate. The catalysed reaction is (2Z,6Z)-farnesyl diphosphate = (1S,5S,6S)-alpha-bergamotene + diphosphate. Its pathway is secondary metabolite biosynthesis; terpenoid biosynthesis. Its function is as follows. Sesquiterpene synthase involved in the biosynthesis of volatile compounds. Mediates the conversion of (2E,6E)-farnesyl diphosphate (FPP) into gamma-gurjunene, (E)-beta-farnesene and (+)-valencene, and of (2Z,6Z)-farnesyl diphosphate ((ZZ)-FPP) into (E)-alpha-bergamotene and (Z)-gamma-bisabolene as well as beta-bisabolene, (Z)-alpha-bergamotene and (E)-gamma-bisabolene to a lower extent. Can act with a low efficiency as a monoterpene synthase with geranyl diphosphate (GPP) as substrate, thus producing beta-myrcene, (E)-beta-ocimene, limonene, terpinolene, gamma-terpinene and (Z)-beta-ocimene. The protein is Terpene synthase 17 of Solanum habrochaites (Wild tomato).